We begin with the raw amino-acid sequence, 328 residues long: Fe(3+) ions import ATP-binding protein FbpC 1 (328 aa).

Residues 7–237 enclose the ABC transporter domain; sequence LVLKNITKAF…PNSLFLANFM (231 aa). Residue 39-46 participates in ATP binding; the sequence is GPSGCGKT.

This sequence belongs to the ABC transporter superfamily. Fe(3+) ion importer (TC 3.A.1.10) family. The complex is composed of two ATP-binding proteins (FbpC), two transmembrane proteins (FbpB) and a solute-binding protein (FbpA).

The protein localises to the cell inner membrane. It catalyses the reaction Fe(3+)(out) + ATP + H2O = Fe(3+)(in) + ADP + phosphate + H(+). In terms of biological role, part of the ABC transporter complex FbpABC involved in Fe(3+) ions import. Responsible for energy coupling to the transport system. The sequence is that of Fe(3+) ions import ATP-binding protein FbpC 1 from Haemophilus influenzae (strain ATCC 51907 / DSM 11121 / KW20 / Rd).